We begin with the raw amino-acid sequence, 152 residues long: Superoxide dismutase [Cu-Zn] (152 aa).

A lipid anchor (S-palmitoyl cysteine) is attached at cysteine 7. 3 residues coordinate Cu cation: histidine 47, histidine 49, and histidine 64. Cysteine 58 and cysteine 146 are oxidised to a cystine. 4 residues coordinate Zn(2+): histidine 64, histidine 72, histidine 81, and aspartate 84. Position 120 (histidine 120) interacts with Cu cation.

It belongs to the Cu-Zn superoxide dismutase family. As to quaternary structure, homodimer. It depends on Cu cation as a cofactor. Requires Zn(2+) as cofactor.

The protein resides in the cytoplasm. It is found in the nucleus. It carries out the reaction 2 superoxide + 2 H(+) = H2O2 + O2. Functionally, destroys radicals which are normally produced within the cells and which are toxic to biological systems. The chain is Superoxide dismutase [Cu-Zn] (sod1) from Xiphias gladius (Swordfish).